Here is a 119-residue protein sequence, read N- to C-terminus: Large ribosomal subunit protein bL20 (119 aa).

Belongs to the bacterial ribosomal protein bL20 family.

In terms of biological role, binds directly to 23S ribosomal RNA and is necessary for the in vitro assembly process of the 50S ribosomal subunit. It is not involved in the protein synthesizing functions of that subunit. The protein is Large ribosomal subunit protein bL20 of Clostridium perfringens (strain ATCC 13124 / DSM 756 / JCM 1290 / NCIMB 6125 / NCTC 8237 / Type A).